A 254-amino-acid chain; its full sequence is Proteasome subunit alpha type-4 (254 aa).

At threonine 60 the chain carries Phosphothreonine. The interval 235–254 is disordered; that stretch reads QIEQEKQEQQEQDKKKKSNH. Basic and acidic residues predominate over residues 237–248; that stretch reads EQEKQEQQEQDK.

It belongs to the peptidase T1A family. The 26S proteasome consists of a 20S proteasome core and two 19S regulatory subunits. The 20S proteasome core is composed of 28 subunits that are arranged in four stacked rings, resulting in a barrel-shaped structure. The two end rings are each formed by seven alpha subunits, and the two central rings are each formed by seven beta subunits. The catalytic chamber with the active sites is on the inside of the barrel. Interacts with CIC1.

It is found in the cytoplasm. Its subcellular location is the nucleus. Its function is as follows. The proteasome degrades poly-ubiquitinated proteins in the cytoplasm and in the nucleus. It is essential for the regulated turnover of proteins and for the removal of misfolded proteins. The proteasome is a multicatalytic proteinase complex that is characterized by its ability to cleave peptides with Arg, Phe, Tyr, Leu, and Glu adjacent to the leaving group at neutral or slightly basic pH. It has an ATP-dependent proteolytic activity. The sequence is that of Proteasome subunit alpha type-4 (PRE6) from Saccharomyces cerevisiae (strain ATCC 204508 / S288c) (Baker's yeast).